Reading from the N-terminus, the 283-residue chain is NADPH-dependent 7-cyano-7-deazaguanine reductase (283 aa).

A substrate-binding site is contributed by 90–92 (IES). 92–93 (SK) contacts NADPH. The active-site Thioimide intermediate is cysteine 190. Aspartate 197 serves as the catalytic Proton donor. 229 to 230 (HE) contacts substrate. 258 to 259 (RG) lines the NADPH pocket.

The protein belongs to the GTP cyclohydrolase I family. QueF type 2 subfamily. In terms of assembly, homodimer.

The protein localises to the cytoplasm. It carries out the reaction 7-aminomethyl-7-carbaguanine + 2 NADP(+) = 7-cyano-7-deazaguanine + 2 NADPH + 3 H(+). It participates in tRNA modification; tRNA-queuosine biosynthesis. Catalyzes the NADPH-dependent reduction of 7-cyano-7-deazaguanine (preQ0) to 7-aminomethyl-7-deazaguanine (preQ1). This Dechloromonas aromatica (strain RCB) protein is NADPH-dependent 7-cyano-7-deazaguanine reductase.